The following is a 225-amino-acid chain: PKHD-type hydroxylase YbiX (225 aa).

Residues 78-177 (TLSTPLFNRY…RVASFMWIQS (100 aa)) form the Fe2OG dioxygenase domain. Residues His96, Asp98, and His158 each coordinate Fe cation. Arg168 lines the 2-oxoglutarate pocket.

The cofactor is Fe(2+). L-ascorbate is required as a cofactor.

The polypeptide is PKHD-type hydroxylase YbiX (Escherichia coli (strain 55989 / EAEC)).